Here is a 184-residue protein sequence, read N- to C-terminus: Dual-action ribosomal maturation protein DarP (184 aa).

The disordered stretch occupies residues 1-21 (MYKHPDEEWLDEIPGQQENED).

This sequence belongs to the DarP family.

It is found in the cytoplasm. Functionally, member of a network of 50S ribosomal subunit biogenesis factors which assembles along the 30S-50S interface, preventing incorrect 23S rRNA structures from forming. Promotes peptidyl transferase center (PTC) maturation. This chain is Dual-action ribosomal maturation protein DarP, found in Edwardsiella ictaluri (strain 93-146).